The chain runs to 498 residues: MASQGTKRSYEQMETDGERQNATEIRASVGKMIDGIGRFYIQMCTELKLSDYEGRLIQNSLTIERMVLSAFDERRNRYLEEHPSAGKDPKKTGGPIYKRVDGKWMRELVLYDKEEIRRIWRQANNGDDATRGLTHMMIWHSNLNDTTYQRTRALVRTGMDPRMCSLMQGSTLPRRSGAAGAAVKGVGTMVMELIRMIKRGINDRNFWRGENGRKTRIAYERMCNILKGKFQTAAQRAMMDQVRESRNPGNAEYEDLIFLARSALILRGSVAHKSCLPACVYGPAVASGYDFEKEGYSLVGIDPFKLLQNSQVYSLIRPNENPAHKSQLVWMACNSAAFEDLRLLSFIRGTKVFPRGKLSTRGVQIASNENMDTMESSTLELRSRYWAIRTRSGGNTNQQRASAGQISVQPAFSVQKNLPFDKSTIMAAFTGNTEGRTSDMRAEIIRMMEGAKPEEVSFRGRGVFELSDEKATNPIVPSFDMSNEGSYFFGDNAEEYDN.

The Unconventional nuclear localization signal motif lies at 1 to 18 (MASQGTKRSYEQMETDGE). Residues 1 to 21 (MASQGTKRSYEQMETDGERQN) are disordered. The span at 8–21 (RSYEQMETDGERQN) shows a compositional bias: basic and acidic residues. Residues 198–216 (KRGINDRNFWRGENGRKTR) carry the Bipartite nuclear localization signal motif.

This sequence belongs to the influenza viruses nucleoprotein family. Homomultimerizes to form the nucleocapsid. May bind host exportin-1/XPO1. Binds to viral genomic RNA. Protein-RNA contacts are mediated by a combination of electrostatic interactions between positively charged residues and the phosphate backbone and planar interactions between aromatic side chains and bases. Post-translationally, late in virus-infected cells, may be cleaved from a 56-kDa protein to a 53-kDa protein by a cellular caspase. This cleavage might be a marker for the onset of apoptosis in infected cells or have a specific function in virus host interaction.

It is found in the virion. The protein localises to the host nucleus. Its function is as follows. Encapsidates the negative strand viral RNA, protecting it from nucleases. The encapsidated genomic RNA is termed the ribonucleoprotein (RNP) and serves as template for transcription and replication. The RNP needs to be localized in the host nucleus to start an infectious cycle, but is too large to diffuse through the nuclear pore complex. NP comprises at least 2 nuclear localization signals that are responsible for the active RNP import into the nucleus through cellular importin alpha/beta pathway. Later in the infection, nclear export of RNPs are mediated through viral proteins NEP interacting with M1 which binds nucleoproteins. It is possible that nucleoprotein binds directly host exportin-1/XPO1 and plays an active role in RNPs nuclear export. M1 interaction with RNP seems to hide nucleoprotein's nuclear localization signals. Soon after a virion infects a new cell, M1 dissociates from the RNP under acidification of the virion driven by M2 protein. Dissociation of M1 from RNP unmasks nucleoprotein's nuclear localization signals, targeting the RNP to the nucleus. The protein is Nucleoprotein of Aves (whales).